The following is a 350-amino-acid chain: Uroporphyrinogen decarboxylase (350 aa).

Substrate is bound by residues 23-27 (RQAGR), Asp-73, Tyr-150, Thr-205, and His-322.

The protein belongs to the uroporphyrinogen decarboxylase family. Homodimer.

Its subcellular location is the cytoplasm. The catalysed reaction is uroporphyrinogen III + 4 H(+) = coproporphyrinogen III + 4 CO2. It functions in the pathway porphyrin-containing compound metabolism; protoporphyrin-IX biosynthesis; coproporphyrinogen-III from 5-aminolevulinate: step 4/4. Catalyzes the decarboxylation of four acetate groups of uroporphyrinogen-III to yield coproporphyrinogen-III. The sequence is that of Uroporphyrinogen decarboxylase from Methylococcus capsulatus (strain ATCC 33009 / NCIMB 11132 / Bath).